Here is a 677-residue protein sequence, read N- to C-terminus: Threonine--tRNA ligase (677 aa).

Positions 1–59 constitute a TGS domain; it reads MAQATISITVNGEAKEVEATTTGVELFAEDKNIIAVKINGENRDLYTPLNDGDTVDPIA. A catalytic region spans residues 255-561; that stretch reads DHRKLGAEMD…LLEHYAGAFP (307 aa). Residues cysteine 360, histidine 411, and histidine 538 each coordinate Zn(2+).

The protein belongs to the class-II aminoacyl-tRNA synthetase family. Homodimer. Zn(2+) is required as a cofactor.

The protein localises to the cytoplasm. The catalysed reaction is tRNA(Thr) + L-threonine + ATP = L-threonyl-tRNA(Thr) + AMP + diphosphate + H(+). In terms of biological role, catalyzes the attachment of threonine to tRNA(Thr) in a two-step reaction: L-threonine is first activated by ATP to form Thr-AMP and then transferred to the acceptor end of tRNA(Thr). Also edits incorrectly charged L-seryl-tRNA(Thr). The chain is Threonine--tRNA ligase from Bifidobacterium longum (strain NCC 2705).